The chain runs to 211 residues: Probable chemoreceptor glutamine deamidase CheD (211 aa).

This sequence belongs to the CheD family.

The catalysed reaction is L-glutaminyl-[protein] + H2O = L-glutamyl-[protein] + NH4(+). In terms of biological role, probably deamidates glutamine residues to glutamate on methyl-accepting chemotaxis receptors (MCPs), playing an important role in chemotaxis. This is Probable chemoreceptor glutamine deamidase CheD from Hahella chejuensis (strain KCTC 2396).